The sequence spans 436 residues: GTPase Der (436 aa).

EngA-type G domains are found at residues 4 to 167 (PTVA…PVEE) and 175 to 351 (IRFS…ESQN). GTP is bound by residues 10 to 17 (GRPNVGKS), 57 to 61 (DTGGI), 119 to 122 (NKVD), 181 to 188 (GRPNVGKS), 229 to 233 (DTAGM), and 294 to 297 (NKWD). Residues 352–436 (KRIPSAVLND…PIHLIARKRK (85 aa)) enclose the KH-like domain.

Belongs to the TRAFAC class TrmE-Era-EngA-EngB-Septin-like GTPase superfamily. EngA (Der) GTPase family. Associates with the 50S ribosomal subunit.

Its function is as follows. GTPase that plays an essential role in the late steps of ribosome biogenesis. In Streptococcus pyogenes serotype M3 (strain ATCC BAA-595 / MGAS315), this protein is GTPase Der.